Here is a 227-residue protein sequence, read N- to C-terminus: UPF0758 protein Dhaf_4352 (227 aa).

The MPN domain occupies 105–227; sequence VINSPQDIAH…YISLKERGIL (123 aa). 3 residues coordinate Zn(2+): His-176, His-178, and Asp-189. A JAMM motif motif is present at residues 176 to 189; the sequence is HNHPSGDPTPSSED.

This sequence belongs to the UPF0758 family.

This is UPF0758 protein Dhaf_4352 from Desulfitobacterium hafniense (strain DSM 10664 / DCB-2).